Reading from the N-terminus, the 290-residue chain is Porphobilinogen deaminase (290 aa).

The residue at position 237 (cysteine 237) is an S-(dipyrrolylmethanemethyl)cysteine.

This sequence belongs to the HMBS family. Monomer. It depends on dipyrromethane as a cofactor.

It catalyses the reaction 4 porphobilinogen + H2O = hydroxymethylbilane + 4 NH4(+). It participates in porphyrin-containing compound metabolism; protoporphyrin-IX biosynthesis; coproporphyrinogen-III from 5-aminolevulinate: step 2/4. Its function is as follows. Tetrapolymerization of the monopyrrole PBG into the hydroxymethylbilane pre-uroporphyrinogen in several discrete steps. The polypeptide is Porphobilinogen deaminase (Clostridium botulinum (strain Kyoto / Type A2)).